The chain runs to 1363 residues: Kinesin-like protein kif7 (1363 aa).

The Kinesin motor domain occupies 15-347; the sequence is AVQVAVRVRP…LNYAKRARNI (333 aa). Residue 94–101 coordinates ATP; that stretch reads GQTGSGKT. Coiled-coil stretches lie at residues 358 to 385 and 491 to 552; these read EPDR…SETR and EDWR…LLAQ. The segment covering 603-622 has biased composition (polar residues); the sequence is DSSSYSEQTQWDGTHGNTHC. The disordered stretch occupies residues 603 to 642; the sequence is DSSSYSEQTQWDGTHGNTHCESSRKLNRDEDGHMQTTRDK. Basic and acidic residues predominate over residues 623–640; it reads ESSRKLNRDEDGHMQTTR. Coiled coils occupy residues 714–1068 and 1116–1225; these read LLQA…AAIE and DKVV…LREM. A disordered region spans residues 1314 to 1346; the sequence is IVQPGMNSTHWSGSTSLPVTRPRREPRRSSLNT. Residues 1318–1331 show a composition bias toward polar residues; the sequence is GMNSTHWSGSTSLP.

Belongs to the TRAFAC class myosin-kinesin ATPase superfamily. Kinesin family. KIF27 subfamily. In terms of assembly, binds microtubules. Interacts with gli1 and sufu.

The protein localises to the cytoplasm. It is found in the cytoskeleton. The protein resides in the cell projection. It localises to the cilium. In terms of biological role, acts downstream of smo as an intracellular repressor of hedgehog signaling pathway, mainly through the suppression of gli1 activity. This negative regulatory effect is enhanced in conjunction with the suppressor of fused (sufu) protein. Positively regulates gli2a activity by promoting its dissociation from sufu. Involved in the regulation of microtubular dynamics. The sequence is that of Kinesin-like protein kif7 (kif7) from Danio rerio (Zebrafish).